The chain runs to 480 residues: UDP-glucose 6-dehydrogenase 2 (480 aa).

Residues G8–G13, D33, R38, V86–T90, S127–T128, and E161 each bind NAD(+). Substrate contacts are provided by residues E157–E161, K216–L223, and R256–G269. Residue C272 is the Nucleophile of the active site. C272–K275 contacts NAD(+). Residue F334–K335 participates in substrate binding. R342 serves as a coordination point for NAD(+). R447 contributes to the substrate binding site.

It belongs to the UDP-glucose/GDP-mannose dehydrogenase family. In terms of tissue distribution, preferentially expressed in roots.

It catalyses the reaction UDP-alpha-D-glucose + 2 NAD(+) + H2O = UDP-alpha-D-glucuronate + 2 NADH + 3 H(+). Its pathway is nucleotide-sugar biosynthesis; UDP-alpha-D-glucuronate biosynthesis; UDP-alpha-D-glucuronate from UDP-alpha-D-glucose: step 1/1. With respect to regulation, inhibited by UDP-xylose. In terms of biological role, involved in the biosynthesis of UDP-glucuronic acid (UDP-GlcA), providing nucleotide sugars for cell-wall polymers. Required for the formation of cell wall ingrowths on the outer cell walls of nematode-induced syncytia. The chain is UDP-glucose 6-dehydrogenase 2 (UGD2) from Arabidopsis thaliana (Mouse-ear cress).